The following is a 403-amino-acid chain: Acetylornithine aminotransferase (403 aa).

Residues 107–108 (GA) and F140 contribute to the pyridoxal 5'-phosphate site. R143 is a N(2)-acetyl-L-ornithine binding site. 225 to 228 (DEVQ) lines the pyridoxal 5'-phosphate pocket. Residue K254 is modified to N6-(pyridoxal phosphate)lysine. A N(2)-acetyl-L-ornithine-binding site is contributed by S282. T283 lines the pyridoxal 5'-phosphate pocket.

It belongs to the class-III pyridoxal-phosphate-dependent aminotransferase family. ArgD subfamily. As to quaternary structure, homodimer. The cofactor is pyridoxal 5'-phosphate.

The protein localises to the cytoplasm. It carries out the reaction N(2)-acetyl-L-ornithine + 2-oxoglutarate = N-acetyl-L-glutamate 5-semialdehyde + L-glutamate. Its pathway is amino-acid biosynthesis; L-arginine biosynthesis; N(2)-acetyl-L-ornithine from L-glutamate: step 4/4. The chain is Acetylornithine aminotransferase from Vibrio cholerae serotype O1 (strain ATCC 39315 / El Tor Inaba N16961).